The sequence spans 51 residues: UPF0391 membrane protein Psyc_0130 (51 aa).

2 helical membrane passes run 6–26 and 28–47; these read IIFAVIALLASFLGFGGVAGL and ANFAYILLALAVILFIVAFV.

It belongs to the UPF0391 family.

It localises to the cell membrane. This chain is UPF0391 membrane protein Psyc_0130, found in Psychrobacter arcticus (strain DSM 17307 / VKM B-2377 / 273-4).